Reading from the N-terminus, the 116-residue chain is U16-barytoxin-Tl1a (116 aa).

The N-terminal stretch at methionine 1–alanine 20 is a signal peptide. The propeptide occupies lysine 21–arginine 74. Intrachain disulfides connect cysteine 75-cysteine 90, cysteine 82-cysteine 95, and cysteine 89-cysteine 110.

The protein belongs to the neurotoxin 14 (magi-1) family. 06 (ICK-Trit) subfamily. As to expression, expressed by the venom gland.

It is found in the secreted. Ion channel inhibitor. In Trittame loki (Brush-footed trapdoor spider), this protein is U16-barytoxin-Tl1a.